Consider the following 309-residue polypeptide: NAD kinase (309 aa).

Aspartate 89 functions as the Proton acceptor in the catalytic mechanism. Residues 89–90, 163–164, histidine 174, arginine 191, aspartate 193, and 204–209 each bind NAD(+); these read DG, NE, and TAYSLS.

Belongs to the NAD kinase family. The cofactor is a divalent metal cation.

It is found in the cytoplasm. It catalyses the reaction NAD(+) + ATP = ADP + NADP(+) + H(+). Functionally, involved in the regulation of the intracellular balance of NAD and NADP, and is a key enzyme in the biosynthesis of NADP. Catalyzes specifically the phosphorylation on 2'-hydroxyl of the adenosine moiety of NAD to yield NADP. The chain is NAD kinase from Shewanella frigidimarina (strain NCIMB 400).